The chain runs to 155 residues: Ribonuclease H (155 aa).

The 142-residue stretch at 1 to 142 folds into the RNase H type-1 domain; that stretch reads MLKQVEIFTD…CDELARAAAM (142 aa). Mg(2+) contacts are provided by aspartate 10, glutamate 48, aspartate 70, and aspartate 134.

It belongs to the RNase H family. In terms of assembly, monomer. It depends on Mg(2+) as a cofactor.

Its subcellular location is the cytoplasm. The catalysed reaction is Endonucleolytic cleavage to 5'-phosphomonoester.. Functionally, endonuclease that specifically degrades the RNA of RNA-DNA hybrids. This is Ribonuclease H from Escherichia coli O127:H6 (strain E2348/69 / EPEC).